Here is an 88-residue protein sequence, read N- to C-terminus: Small ribosomal subunit protein bS20 (88 aa).

The segment at 1–27 (MANSKSAKKRALQSEKRRQHNASRRSM) is disordered.

Belongs to the bacterial ribosomal protein bS20 family.

Functionally, binds directly to 16S ribosomal RNA. The sequence is that of Small ribosomal subunit protein bS20 from Shewanella sediminis (strain HAW-EB3).